A 580-amino-acid chain; its full sequence is Methyl-CpG-binding domain protein 4 (580 aa).

The interval 1–36 (MGTTGLESLSLGDRGAAPTVTSSERLVPDPPNDLRK) is disordered. The MBD domain occupies 76-148 (ATAGTECRKS…EDFDFTVLSK (73 aa)). 2 positions are modified to phosphoserine: S318 and S428. D560 is a catalytic residue.

In terms of assembly, interacts with MLH1.

The protein localises to the nucleus. Functionally, mismatch-specific DNA N-glycosylase involved in DNA repair. Has thymine glycosylase activity and is specific for G:T mismatches within methylated and unmethylated CpG sites. Can also remove uracil or 5-fluorouracil in G:U mismatches. Has no lyase activity. Was first identified as methyl-CpG-binding protein. This is Methyl-CpG-binding domain protein 4 from Homo sapiens (Human).